The following is a 102-amino-acid chain: MSREITFFSRFEQDILAGRKTITIRDASESHFQPGEVLRVSRNEDNVFFCQIEVLSVTPVRLDGLTEQHARQENMSLGELKQVIKEIYPGLDELFVITFAKR.

Residues 6-93 enclose the ASCH domain; the sequence is TFFSRFEQDI…IKEIYPGLDE (88 aa). Catalysis depends on K20, which acts as the Proton acceptor. T23 serves as the catalytic Nucleophile. The Proton donor role is filled by E73.

It belongs to the N(4)-acetylcytidine amidohydrolase family.

It catalyses the reaction N(4)-acetylcytidine + H2O = cytidine + acetate + H(+). The catalysed reaction is N(4)-acetyl-2'-deoxycytidine + H2O = 2'-deoxycytidine + acetate + H(+). The enzyme catalyses N(4)-acetylcytosine + H2O = cytosine + acetate + H(+). Functionally, catalyzes the hydrolysis of N(4)-acetylcytidine (ac4C). The protein is N(4)-acetylcytidine amidohydrolase of Serratia proteamaculans (strain 568).